A 321-amino-acid polypeptide reads, in one-letter code: o-succinylbenzoate synthase (321 aa).

Lys134 (proton donor) is an active-site residue. The Mg(2+) site is built by Asp162, Glu191, and Asp214. The Proton acceptor role is filled by Lys236.

The protein belongs to the mandelate racemase/muconate lactonizing enzyme family. MenC type 1 subfamily. The cofactor is a divalent metal cation.

It catalyses the reaction (1R,6R)-6-hydroxy-2-succinyl-cyclohexa-2,4-diene-1-carboxylate = 2-succinylbenzoate + H2O. It participates in quinol/quinone metabolism; 1,4-dihydroxy-2-naphthoate biosynthesis; 1,4-dihydroxy-2-naphthoate from chorismate: step 4/7. The protein operates within quinol/quinone metabolism; menaquinone biosynthesis. Converts 2-succinyl-6-hydroxy-2,4-cyclohexadiene-1-carboxylate (SHCHC) to 2-succinylbenzoate (OSB). This chain is o-succinylbenzoate synthase, found in Enterobacter sp. (strain 638).